The chain runs to 155 residues: Microsomal glutathione S-transferase 1 (155 aa).

Topologically, residues 3–9 are lumenal; that stretch reads DLTQVMD. Residues 10–33 form a helical membrane-spanning segment; that stretch reads DEVFMAFASYATIILSKMMLMSTA. The Cytoplasmic segment spans residues 34–62; that stretch reads TAFYRLTRKVFANPEDCVAFGKGENAKKY. Arg38 is a binding site for glutathione. Lys42, Lys55, and Lys60 each carry N6-acetyllysine. The helical transmembrane segment at 63 to 96 threads the bilayer; the sequence is LRTDDRVERVRRAHLNDLENIIPFLGIGLLYSLS. Glutathione contacts are provided by Arg73, Arg74, His76, and Glu81. Over 97-99 the chain is Lumenal; sequence GPD. The chain crosses the membrane as a helical span at residues 100–123; that stretch reads PSTAILHFRLFVGARIYHTIAYLT. Glutathione is bound at residue Tyr121. Topologically, residues 124-128 are cytoplasmic; it reads PLPQP. The chain crosses the membrane as a helical span at residues 129–148; sequence NRALSFFVGYGVTLSMAYRL. Residues 149 to 155 are Lumenal-facing; that stretch reads LKSKLYL.

It belongs to the MAPEG family. As to quaternary structure, homotrimer; The trimer binds only one molecule of glutathione. In terms of tissue distribution, highly expressed in liver.

The protein resides in the endoplasmic reticulum membrane. The protein localises to the mitochondrion outer membrane. The enzyme catalyses RX + glutathione = an S-substituted glutathione + a halide anion + H(+). Functionally, conjugation of reduced glutathione to a wide number of exogenous and endogenous hydrophobic electrophiles. The polypeptide is Microsomal glutathione S-transferase 1 (MGST1) (Homo sapiens (Human)).